The chain runs to 180 residues: Inosine/xanthosine triphosphatase (180 aa).

8 to 13 (TTNPAK) serves as a coordination point for substrate. Mg(2+) contacts are provided by D38 and E68. Substrate is bound at residue 68–69 (EA).

This sequence belongs to the YjjX NTPase family. As to quaternary structure, homodimer. Mg(2+) serves as cofactor. The cofactor is Mn(2+).

The catalysed reaction is XTP + H2O = XDP + phosphate + H(+). It catalyses the reaction ITP + H2O = IDP + phosphate + H(+). In terms of biological role, phosphatase that hydrolyzes non-canonical purine nucleotides such as XTP and ITP to their respective diphosphate derivatives. Probably excludes non-canonical purines from DNA/RNA precursor pool, thus preventing their incorporation into DNA/RNA and avoiding chromosomal lesions. The polypeptide is Inosine/xanthosine triphosphatase (Yersinia pestis bv. Antiqua (strain Antiqua)).